We begin with the raw amino-acid sequence, 592 residues long: Cytosolic purine 5'-nucleotidase (592 aa).

The span at 1–15 shows a compositional bias: low complexity; sequence MAENNNNNNNNNNNN. The interval 1 to 37 is disordered; the sequence is MAENNNNNNNNNNNNVSTPPHQKPHLTTGLRTSSSGL. Aspartate 122 functions as the Nucleophile in the catalytic mechanism. Residues aspartate 122 and aspartate 124 each coordinate IMP. Mg(2+) contacts are provided by aspartate 122 and aspartate 124. The active-site Proton donor is aspartate 124. Asparagine 226 serves as a coordination point for ATP. The disordered stretch occupies residues 252-273; it reads LTEEVADEQQQMNSPPLSSLGS. Positions 259-273 are enriched in polar residues; the sequence is EQQQMNSPPLSSLGS. The IMP site is built by arginine 299, aspartate 303, lysine 312, threonine 347, asparagine 348, serine 349, and lysine 385. Aspartate 444 provides a ligand contact to Mg(2+). Glutamine 547 and arginine 550 together coordinate ATP.

This sequence belongs to the 5'(3')-deoxyribonucleotidase family. Homotetramer. Requires Mg(2+) as cofactor.

The protein resides in the cytoplasm. It localises to the cytosol. It carries out the reaction a ribonucleoside 5'-phosphate + H2O = a ribonucleoside + phosphate. It catalyses the reaction a 2'-deoxyribonucleoside + a ribonucleoside 5'-phosphate = a ribonucleoside + a 2'-deoxyribonucleoside 5'-phosphate. Functionally, broad specificity cytosolic 5'-nucleotidase that catalyzes the dephosphorylation of 6-hydroxypurine nucleoside 5'-monophosphates. In addition, possesses a phosphotransferase activity by which it can transfer a phosphate from a donor nucleoside monophosphate to an acceptor nucleoside. Through these activities regulates the purine nucleoside/nucleotide pools within the cell. The sequence is that of Cytosolic purine 5'-nucleotidase (nt5c2) from Dictyostelium discoideum (Social amoeba).